Here is a 574-residue protein sequence, read N- to C-terminus: Sentrin-specific protease 3 (574 aa).

The tract at residues 1–125 (MKETIQGTGS…PTHRKTCSQR (125 aa)) is disordered. Residues Ser54, Ser73, and Ser75 each carry the phosphoserine modification. Positions 74 to 93 (ASEEEEEEEEEEDEDEEEEV) are enriched in acidic residues. Basic residues predominate over residues 112–125 (RPSRPTHRKTCSQR). 2 short sequence motifs (nuclear localization signal) span residues 125 to 128 (RRRR) and 153 to 159 (RHRGRRR). Positions 161–181 (LAHPKNHLSPQQGGATPQVPS) are disordered. Position 169 is a phosphoserine (Ser169). The residue at position 176 (Thr176) is a Phosphothreonine. 4 positions are modified to phosphoserine: Ser181, Ser188, Ser212, and Ser232. Positions 386-543 (HVLTMDDLGT…AFVLQYCKHL (158 aa)) are protease. Active-site residues include His465 and Asp482. The active-site Nucleophile is Cys532.

This sequence belongs to the peptidase C48 family. Component of some MLL1/MLL complex, at least composed of the core components KMT2A/MLL1, ASH2L, HCFC1/HCF1, WDR5 and RBBP5, as well as the facultative components BACC1, CHD8, E2F6, HSP70, INO80C, KANSL1, LAS1L, MAX, MCRS1, MGA, MYST1/MOF, PELP1, PHF20, PRP31, RING2, RUVB1/TIP49A, RUVB2/TIP49B, SENP3, TAF1, TAF4, TAF6, TAF7, TAF9 and TEX10. Interacts with EP300, NPM1 and CDCA8. Component of the 5FMC complex, at least composed of PELP1, LAS1L, TEX10, WDR18 and SENP3; the complex interacts with methylated CHTOP and ZNF148. Interacts with NOL9. Interacts with CCAR2.

It is found in the nucleus. Its subcellular location is the nucleolus. The protein localises to the nucleoplasm. It localises to the cytoplasm. With respect to regulation, on oxidative stress, SENP3 degradation is blocked by inhibition of its ubiquitination, which stabilizes it as it accumulates in the nucleoplasm. Its function is as follows. Protease that releases SUMO2 and SUMO3 monomers from sumoylated substrates, but has only weak activity against SUMO1 conjugates. Deconjugates SUMO2 from MEF2D, which increases its transcriptional activation capability. Deconjugates SUMO2 and SUMO3 from CDCA8. Redox sensor that, when redistributed into nucleoplasm, can act as an effector to enhance HIF1A transcriptional activity by desumoylating EP300. Required for rRNA processing through deconjugation of SUMO2 and SUMO3 from nucleophosmin, NPM1. Plays a role in the regulation of sumoylation status of ZNF148. Functions as a component of the Five Friends of Methylated CHTOP (5FMC) complex; the 5FMC complex is recruited to ZNF148 by methylated CHTOP, leading to desumoylation of ZNF148 and subsequent transactivation of ZNF148 target genes. Deconjugates SUMO2 from KAT5. Catalyzes desumoylation of MRE11. The polypeptide is Sentrin-specific protease 3 (Homo sapiens (Human)).